The sequence spans 165 residues: Deoxyuridine 5'-triphosphate nucleotidohydrolase (165 aa).

This sequence belongs to the dUTPase family. Homotrimer. It depends on Mg(2+) as a cofactor.

The protein resides in the host cytoplasm. Its subcellular location is the virion. The enzyme catalyses dUTP + H2O = dUMP + diphosphate + H(+). Its function is as follows. The viral dUTPase may play a role in lowering the dUTP concentration in natural infections to minimize misincorporation of deoxyuridine into the viral DNA and ensure the fidelity of genome replication. The chain is Deoxyuridine 5'-triphosphate nucleotidohydrolase from Ornithodoros (relapsing fever ticks).